An 819-amino-acid polypeptide reads, in one-letter code: DNA topoisomerase 4 subunit A (819 aa).

In terms of domain architecture, Topo IIA-type catalytic spans L30–L496. Y118 (O-(5'-phospho-DNA)-tyrosine intermediate) is an active-site residue.

It belongs to the type II topoisomerase GyrA/ParC subunit family. ParC type 2 subfamily. In terms of assembly, heterotetramer composed of ParC and ParE.

The protein resides in the cell membrane. The catalysed reaction is ATP-dependent breakage, passage and rejoining of double-stranded DNA.. In terms of biological role, topoisomerase IV is essential for chromosome segregation. It relaxes supercoiled DNA. Performs the decatenation events required during the replication of a circular DNA molecule. This is DNA topoisomerase 4 subunit A from Streptococcus pyogenes serotype M3 (strain ATCC BAA-595 / MGAS315).